A 185-amino-acid chain; its full sequence is Anaphase-promoting complex subunit 10 (185 aa).

T2 bears the N-acetylthreonine mark. A DOC domain is found at 2–185; sequence TTPNKTPPGA…IDFMMYRSIR (184 aa). K169 bears the N6-acetyllysine mark.

This sequence belongs to the APC10 family. The mammalian APC/C is composed at least of 14 distinct subunits ANAPC1, ANAPC2, CDC27/APC3, ANAPC4, ANAPC5, CDC16/APC6, ANAPC7, CDC23/APC8, ANAPC10, ANAPC11, CDC26/APC12, ANAPC13, ANAPC15 and ANAPC16 that assemble into a complex of at least 19 chains with a combined molecular mass of around 1.2 MDa; APC/C interacts with FZR1 and FBXO5. The C-terminus of APC10 binds to CDC27/APC3. Interacts with PIWIL1; interaction only takes place when PIWIL1 binds piRNA. Interacts with FBXO43; the interaction is direct.

Its pathway is protein modification; protein ubiquitination. Its function is as follows. Component of the anaphase promoting complex/cyclosome (APC/C), a cell cycle-regulated E3 ubiquitin ligase that controls progression through mitosis and the G1 phase of the cell cycle. The APC/C complex acts by mediating ubiquitination and subsequent degradation of target proteins: it mainly mediates the formation of 'Lys-11'-linked polyubiquitin chains and, to a lower extent, the formation of 'Lys-48'- and 'Lys-63'-linked polyubiquitin chains. The APC/C complex catalyzes assembly of branched 'Lys-11'-/'Lys-48'-linked branched ubiquitin chains on target proteins. The polypeptide is Anaphase-promoting complex subunit 10 (ANAPC10) (Bos taurus (Bovine)).